Reading from the N-terminus, the 234-residue chain is 2,3,4,5-tetrahydropyridine-2,6-dicarboxylate N-acetyltransferase (234 aa).

It belongs to the transferase hexapeptide repeat family. DapH subfamily.

It catalyses the reaction (S)-2,3,4,5-tetrahydrodipicolinate + acetyl-CoA + H2O = L-2-acetamido-6-oxoheptanedioate + CoA. It participates in amino-acid biosynthesis; L-lysine biosynthesis via DAP pathway; LL-2,6-diaminopimelate from (S)-tetrahydrodipicolinate (acetylase route): step 1/3. Its function is as follows. Catalyzes the transfer of an acetyl group from acetyl-CoA to tetrahydrodipicolinate. The protein is 2,3,4,5-tetrahydropyridine-2,6-dicarboxylate N-acetyltransferase of Lacticaseibacillus paracasei (strain ATCC 334 / BCRC 17002 / CCUG 31169 / CIP 107868 / KCTC 3260 / NRRL B-441) (Lactobacillus paracasei).